We begin with the raw amino-acid sequence, 143 residues long: uncharacterized protein (143 aa).

Transmembrane regions (helical) follow at residues 16–36 (LIFAQIFIGCLMYFMLIIFVW) and 48–68 (ICYIIIFAIIDFVVCFKFIYV). N-linked (GlcNAc...) asparagine; by host glycosylation is present at Asn-71.

Its subcellular location is the membrane. This is an uncharacterized protein from Acanthamoeba polyphaga (Amoeba).